The sequence spans 77 residues: Translation initiation factor IF-1, chloroplastic (77 aa).

The S1-like domain maps to 1–71; sequence MKEQKLIHEG…TRGRIIYRLR (71 aa).

This sequence belongs to the IF-1 family. As to quaternary structure, component of the 30S ribosomal translation pre-initiation complex which assembles on the 30S ribosome in the order IF-2 and IF-3, IF-1 and N-formylmethionyl-tRNA(fMet); mRNA recruitment can occur at any time during PIC assembly.

The protein localises to the plastid. It localises to the chloroplast. Its function is as follows. One of the essential components for the initiation of protein synthesis. Stabilizes the binding of IF-2 and IF-3 on the 30S subunit to which N-formylmethionyl-tRNA(fMet) subsequently binds. Helps modulate mRNA selection, yielding the 30S pre-initiation complex (PIC). Upon addition of the 50S ribosomal subunit IF-1, IF-2 and IF-3 are released leaving the mature 70S translation initiation complex. In Acorus calamus var. americanus (American sweet flag), this protein is Translation initiation factor IF-1, chloroplastic.